The chain runs to 566 residues: Urease subunit alpha (566 aa).

One can recognise a Urease domain in the interval 128 to 566 (GGIDSHVHFI…LPMAQRYFLF (439 aa)). Ni(2+) contacts are provided by H133, H135, and K216. At K216 the chain carries N6-carboxylysine. H218 contacts substrate. Ni(2+) is bound by residues H245 and H271. Residue H319 is the Proton donor of the active site. D359 provides a ligand contact to Ni(2+).

It belongs to the metallo-dependent hydrolases superfamily. Urease alpha subunit family. Heterotrimer of UreA (gamma), UreB (beta) and UreC (alpha) subunits. Three heterotrimers associate to form the active enzyme. Requires Ni cation as cofactor. Carboxylation allows a single lysine to coordinate two nickel ions.

The protein resides in the cytoplasm. The catalysed reaction is urea + 2 H2O + H(+) = hydrogencarbonate + 2 NH4(+). The protein operates within nitrogen metabolism; urea degradation; CO(2) and NH(3) from urea (urease route): step 1/1. The protein is Urease subunit alpha of Nitrosococcus oceani (strain ATCC 19707 / BCRC 17464 / JCM 30415 / NCIMB 11848 / C-107).